An 821-amino-acid polypeptide reads, in one-letter code: Phenylalanine--tRNA ligase beta subunit (821 aa).

A tRNA-binding domain is found at 39 to 149 (SENVKGIVLG…EDIALNHNLG (111 aa)). The B5 domain maps to 414–507 (LKKILIPLRR…RLIGYDMFDL (94 aa)). The Mg(2+) site is built by Asp-485, Asp-491, Glu-494, and Glu-495. The FDX-ACB domain occupies 727–820 (PTVPKMERDI…IEKKFSTKLR (94 aa)).

Belongs to the phenylalanyl-tRNA synthetase beta subunit family. Type 1 subfamily. In terms of assembly, tetramer of two alpha and two beta subunits. It depends on Mg(2+) as a cofactor.

It localises to the cytoplasm. The catalysed reaction is tRNA(Phe) + L-phenylalanine + ATP = L-phenylalanyl-tRNA(Phe) + AMP + diphosphate + H(+). The protein is Phenylalanine--tRNA ligase beta subunit of Prochlorococcus marinus subsp. pastoris (strain CCMP1986 / NIES-2087 / MED4).